The primary structure comprises 461 residues: Cyclic 2,3-diphosphoglycerate synthetase (461 aa).

This sequence belongs to the cyclic 2,3-diphosphoglycerate synthetase family.

The protein localises to the cytoplasm. The catalysed reaction is (2R)-2,3-bisphosphoglycerate + ATP + H(+) = cyclic (2R)-2,3-bisphosphoglycerate + ADP + phosphate. Catalyzes the formation of cyclic 2,3-diphosphoglycerate (cDPG) by formation of an intramolecular phosphoanhydride bond at the expense of ATP. This Methanosphaera stadtmanae (strain ATCC 43021 / DSM 3091 / JCM 11832 / MCB-3) protein is Cyclic 2,3-diphosphoglycerate synthetase.